A 62-amino-acid polypeptide reads, in one-letter code: Large ribosomal subunit protein uL30 (62 aa).

This sequence belongs to the universal ribosomal protein uL30 family. As to quaternary structure, part of the 50S ribosomal subunit.

The protein is Large ribosomal subunit protein uL30 of Geobacillus thermodenitrificans (strain NG80-2).